The sequence spans 412 residues: Argininosuccinate synthase (412 aa).

Residue 10 to 18 participates in ATP binding; the sequence is AYSGGLDTS. Residue tyrosine 89 coordinates L-citrulline. Residue glycine 119 participates in ATP binding. The L-aspartate site is built by threonine 121, asparagine 125, and aspartate 126. Asparagine 125 serves as a coordination point for L-citrulline. Positions 129, 177, 261, and 273 each coordinate L-citrulline.

It belongs to the argininosuccinate synthase family. Type 1 subfamily. As to quaternary structure, homotetramer.

The protein localises to the cytoplasm. The enzyme catalyses L-citrulline + L-aspartate + ATP = 2-(N(omega)-L-arginino)succinate + AMP + diphosphate + H(+). The protein operates within amino-acid biosynthesis; L-arginine biosynthesis; L-arginine from L-ornithine and carbamoyl phosphate: step 2/3. This chain is Argininosuccinate synthase, found in Bifidobacterium longum (strain NCC 2705).